Here is a 100-residue protein sequence, read N- to C-terminus: Large ribosomal subunit protein uL23 (100 aa).

The protein belongs to the universal ribosomal protein uL23 family. In terms of assembly, part of the 50S ribosomal subunit. Contacts protein L29, and trigger factor when it is bound to the ribosome.

In terms of biological role, one of the early assembly proteins it binds 23S rRNA. One of the proteins that surrounds the polypeptide exit tunnel on the outside of the ribosome. Forms the main docking site for trigger factor binding to the ribosome. In Yersinia enterocolitica serotype O:8 / biotype 1B (strain NCTC 13174 / 8081), this protein is Large ribosomal subunit protein uL23.